A 523-amino-acid polypeptide reads, in one-letter code: GMP synthase [glutamine-hydrolyzing] (523 aa).

One can recognise a Glutamine amidotransferase type-1 domain in the interval 8–205 (KILILDFGSQ…VVNICGCETK (198 aa)). Cys-85 (nucleophile) is an active-site residue. Active-site residues include His-179 and Glu-181. The GMPS ATP-PPase domain maps to 206–398 (WTAENIIEDA…LGLPAEMINR (193 aa)). 233-239 (SGGVDSS) is a binding site for ATP.

As to quaternary structure, homodimer.

It carries out the reaction XMP + L-glutamine + ATP + H2O = GMP + L-glutamate + AMP + diphosphate + 2 H(+). It participates in purine metabolism; GMP biosynthesis; GMP from XMP (L-Gln route): step 1/1. Catalyzes the synthesis of GMP from XMP. This Haemophilus influenzae (strain PittEE) protein is GMP synthase [glutamine-hydrolyzing].